The following is a 213-amino-acid chain: Superoxide dismutase [Mn] (213 aa).

4 residues coordinate Mn(2+): histidine 27, histidine 82, aspartate 168, and histidine 172.

This sequence belongs to the iron/manganese superoxide dismutase family. As to quaternary structure, homodimer. It depends on Mn(2+) as a cofactor.

The catalysed reaction is 2 superoxide + 2 H(+) = H2O2 + O2. Its function is as follows. Destroys superoxide anion radicals which are normally produced within the cells and which are toxic to biological systems. In Mannheimia haemolytica (Pasteurella haemolytica), this protein is Superoxide dismutase [Mn] (sodA).